The chain runs to 95 residues: Co-chaperonin GroES (95 aa).

This sequence belongs to the GroES chaperonin family. Heptamer of 7 subunits arranged in a ring. Interacts with the chaperonin GroEL.

The protein resides in the cytoplasm. Together with the chaperonin GroEL, plays an essential role in assisting protein folding. The GroEL-GroES system forms a nano-cage that allows encapsulation of the non-native substrate proteins and provides a physical environment optimized to promote and accelerate protein folding. GroES binds to the apical surface of the GroEL ring, thereby capping the opening of the GroEL channel. This Streptococcus uberis (strain ATCC BAA-854 / 0140J) protein is Co-chaperonin GroES.